A 163-amino-acid chain; its full sequence is D-aminoacyl-tRNA deacylase (163 aa).

Residues Gly141–Pro142 carry the Gly-cisPro motif, important for rejection of L-amino acids motif.

It belongs to the DTD family. As to quaternary structure, homodimer.

It localises to the cytoplasm. It catalyses the reaction glycyl-tRNA(Ala) + H2O = tRNA(Ala) + glycine + H(+). The catalysed reaction is a D-aminoacyl-tRNA + H2O = a tRNA + a D-alpha-amino acid + H(+). In terms of biological role, an aminoacyl-tRNA editing enzyme that deacylates mischarged D-aminoacyl-tRNAs. Also deacylates mischarged glycyl-tRNA(Ala), protecting cells against glycine mischarging by AlaRS. Acts via tRNA-based rather than protein-based catalysis; rejects L-amino acids rather than detecting D-amino acids in the active site. By recycling D-aminoacyl-tRNA to D-amino acids and free tRNA molecules, this enzyme counteracts the toxicity associated with the formation of D-aminoacyl-tRNA entities in vivo and helps enforce protein L-homochirality. The sequence is that of D-aminoacyl-tRNA deacylase from Neisseria meningitidis serogroup A / serotype 4A (strain DSM 15465 / Z2491).